The chain runs to 702 residues: BRCA1-associated RING domain protein 1 (702 aa).

The segment at 18–67 (CVKCKKPRGDLQYLGSSCKHAYCWECIATFQQKPSGKRSSVARHMCPSCA) adopts an RING-type zinc-finger fold. Disordered regions lie at residues 153 to 205 (DENR…TSVK) and 281 to 346 (ASMS…YGTR). Over residues 174-188 (ASPTRNSTKRPSTVS) the composition is skewed to polar residues. Residues 312-321 (IKSDKIERRS) show a composition bias toward basic and acidic residues. ANK repeat units follow at residues 347-376 (RGEA…CVNE), 379-408 (DGKT…VINA), and 413-442 (TLET…SIKI). A BRCT domain is found at 601–702 (MQPKLFAGCK…LGCSITTPPH (102 aa)).

Heterodimer (via RING-type zinc finger) with brc-1 to form the core CeBCD complex. Brc-1-brd-1 heterodimer-containing CeBCD complexes bound to chromatin are activated as an E3-ubiquitin ligase in response to DNA damage. The heterodimer interacts with the recombinase rad-51 following ionizing irradiation; the interaction is direct. The heterodimer interacts the E2-ubiquitin-conjugating enzyme let-70 following ionizing irradiation. The heterodimer interacts with the pro-crossover proteins msh-5 and syp-3. Interacts with smt-3, tac-1 and ubc-9. In terms of processing, autoubiquitinated. Phosphorylation of CeBCD complexes is required for E3 ubiquitin-protein ligase activity.

The protein localises to the cytoplasm. The protein resides in the nucleus. It is found in the chromosome. The enzyme catalyses S-ubiquitinyl-[E2 ubiquitin-conjugating enzyme]-L-cysteine + [acceptor protein]-L-lysine = [E2 ubiquitin-conjugating enzyme]-L-cysteine + N(6)-ubiquitinyl-[acceptor protein]-L-lysine.. It functions in the pathway protein modification; protein ubiquitination. Its activity is regulated as follows. E3 ubiquitin-protein ligase activity of CeBCD complexes occurs at DNA damage sites. Following DNA damage, E3 ubiquitin-protein ligase activity is reduced by caffeine treatment (inhibitor of ATM and ATK kinase activity). Its function is as follows. Constituent of the CeBCD complex that possesses E3 ubiquitin-protein ligase activity. When bound to chromatin, the brc-1-brd-1 heterodimer within the CeBCD complex is inactive during normal conditions, but in response to DNA damage, the brc-1-brd-1 heterodimer associates with other proteins such as the recombinase rad-51 or the E2-ubiquitin-conjugating enzyme let-70, which activate the CeBCD complex as an E3-ubiquitin ligase. Moreover, association between the brc-1-brd-1 heterodimer and rad-51 and let-70, probably requires DNA checkpoint proteins such as atl-1 and mre-11 in order to induce ubiquitination at DNA damage sites. To this end, the brc-1-brd-1 heterodimer coordinates a diverse range of cellular pathways such as DNA damage repair, ubiquitination and transcriptional regulation to maintain genomic stability. Plays a role in triggering cellular responses at damage sites in response to DNA damage that may be induced by ionizing radiation for example. In particular, protects against chromosome non-disjunction and nuclear fragmentation during meiotic double-strand break repair to ensure sister chromatid recombination and aid chromosome stability. This chain is BRCA1-associated RING domain protein 1, found in Caenorhabditis elegans.